The chain runs to 313 residues: Minor outer capsid protein P9 (313 aa).

This sequence belongs to the phytoreovirus minor outer capsid protein P9 family.

It localises to the virion. It is found in the host cytoplasm. Minor outer capsid protein. In Catharanthus roseus (Madagascar periwinkle), this protein is Minor outer capsid protein P9.